Reading from the N-terminus, the 793-residue chain is Acetyl-CoA decarbonylase/synthase complex subunit alpha (793 aa).

[4Fe-4S] cluster is bound by residues Cys-55, Cys-58, Cys-63, and Cys-73. His-96 serves as a coordination point for CO. [Ni-4Fe-4S] cluster-binding residues include His-229, Cys-257, and Cys-309. 2 consecutive 4Fe-4S ferredoxin-type domains span residues 393–422 and 432–461; these read EQQF…ISEM and EPFS…LKLY. Residues Cys-403, Cys-406, Cys-409, Cys-413, Cys-441, Cys-444, Cys-447, and Cys-451 each contribute to the [4Fe-4S] cluster site. Residues Cys-509, Cys-538, and Cys-573 each coordinate [Ni-4Fe-4S] cluster.

This sequence belongs to the Ni-containing carbon monoxide dehydrogenase family. As to quaternary structure, heterotetramer of two alpha and two epsilon subunits. The ACDS complex is made up of alpha, epsilon, beta, gamma and delta subunits with a probable stoichiometry of (alpha(2)epsilon(2))(4)-beta(8)-(gamma(1)delta(1))(8). It depends on [4Fe-4S] cluster as a cofactor. Requires [Ni-4Fe-4S] cluster as cofactor.

The catalysed reaction is CO + 2 oxidized [2Fe-2S]-[ferredoxin] + H2O = 2 reduced [2Fe-2S]-[ferredoxin] + CO2 + 2 H(+). In terms of biological role, part of the ACDS complex that catalyzes the reversible cleavage of acetyl-CoA, allowing autotrophic growth from CO(2). The alpha-epsilon subcomponent functions as a carbon monoxide dehydrogenase. The polypeptide is Acetyl-CoA decarbonylase/synthase complex subunit alpha (Methanothrix soehngenii (Methanosaeta concilii)).